The sequence spans 430 residues: Phosphomethylpyrimidine synthase (430 aa).

Residues N67, M96, Y125, H161, 183-185 (SRG), 224-227 (DALR), and E263 contribute to the substrate site. H267 serves as a coordination point for Zn(2+). Substrate is bound at residue Y290. H331 serves as a coordination point for Zn(2+). [4Fe-4S] cluster is bound by residues C406, C409, and C413.

The protein belongs to the ThiC family. Homodimer. It depends on [4Fe-4S] cluster as a cofactor.

The catalysed reaction is 5-amino-1-(5-phospho-beta-D-ribosyl)imidazole + S-adenosyl-L-methionine = 4-amino-2-methyl-5-(phosphooxymethyl)pyrimidine + CO + 5'-deoxyadenosine + formate + L-methionine + 3 H(+). It functions in the pathway cofactor biosynthesis; thiamine diphosphate biosynthesis. Catalyzes the synthesis of the hydroxymethylpyrimidine phosphate (HMP-P) moiety of thiamine from aminoimidazole ribotide (AIR) in a radical S-adenosyl-L-methionine (SAM)-dependent reaction. The sequence is that of Phosphomethylpyrimidine synthase from Campylobacter jejuni subsp. doylei (strain ATCC BAA-1458 / RM4099 / 269.97).